We begin with the raw amino-acid sequence, 343 residues long: Signal peptide peptidase 1 (343 aa).

The Lumenal portion of the chain corresponds to Met1–Pro19. Residues Leu20–Val40 traverse the membrane as a helical segment. Over Gly41–Arg62 the chain is Cytoplasmic. Residues Phe63–Lys83 form a helical membrane-spanning segment. Residues Asp84–Asn87 are Lumenal-facing. A helical membrane pass occupies residues Ala88–Pro108. Over Ser109–Glu136 the chain is Cytoplasmic. Residues Phe137–Ala157 traverse the membrane as a helical segment. Over Lys158–His160 the chain is Lumenal. A helical transmembrane segment spans residues Trp161 to Leu181. Over Gly182–Ala188 the chain is Cytoplasmic. Residues Ile189–Val209 traverse the membrane as a helical segment. Asp198 is a catalytic residue. Over Ser210–Arg230 the chain is Lumenal. Residues Pro231–Leu251 form a helical membrane-spanning segment. Residue Asp239 is part of the active site. At Arg252–Ser266 the chain is on the cytoplasmic side. A helical membrane pass occupies residues Ala267–Ala287. The Lumenal segment spans residues Ala288–Pro290. The short motif at Pro290 to Leu292 is the PAL element. Residues Ala291–Gly311 form a helical membrane-spanning segment. The Cytoplasmic portion of the chain corresponds to Glu312–Glu343. The disordered stretch occupies residues Ser322–Glu343. The segment covering Ala324 to Thr334 has biased composition (acidic residues). The short motif at Lys340–Glu343 is the Endoplasmic reticulum targeting signal element.

Belongs to the peptidase A22B family. In terms of tissue distribution, ubiquitous.

It localises to the endoplasmic reticulum membrane. Intramembrane-cleaving aspartic protease (I-CLiP) that cleaves type II membrane signal peptides in the hydrophobic plane of the membrane. Catalyzes intramembrane proteolysis of some signal peptides after they have been cleaved from a preprotein, resulting in the release of the fragment from the ER membrane into the cytoplasm. This Oryza sativa subsp. japonica (Rice) protein is Signal peptide peptidase 1 (SPP1).